The following is a 337-amino-acid chain: tRNA N6-adenosine threonylcarbamoyltransferase (337 aa).

Residues His111 and His115 each contribute to the Fe cation site. Substrate-binding positions include 134–138 (LVSGG), Asp167, Gly180, and Asn272. Asp300 is a binding site for Fe cation.

It belongs to the KAE1 / TsaD family. Fe(2+) serves as cofactor.

Its subcellular location is the cytoplasm. It catalyses the reaction L-threonylcarbamoyladenylate + adenosine(37) in tRNA = N(6)-L-threonylcarbamoyladenosine(37) in tRNA + AMP + H(+). Required for the formation of a threonylcarbamoyl group on adenosine at position 37 (t(6)A37) in tRNAs that read codons beginning with adenine. Is involved in the transfer of the threonylcarbamoyl moiety of threonylcarbamoyl-AMP (TC-AMP) to the N6 group of A37, together with TsaE and TsaB. TsaD likely plays a direct catalytic role in this reaction. The protein is tRNA N6-adenosine threonylcarbamoyltransferase of Escherichia coli O45:K1 (strain S88 / ExPEC).